Reading from the N-terminus, the 416-residue chain is Cyclin-dependent kinase 8 (416 aa).

The tract at residues 1–15 (MDYDFKVKLTGERER) is interaction with CCNC. Residues 21-287 (EYEGCKVGRG…SEQAMQDPYF (267 aa)) enclose the Protein kinase domain. Residues 27–35 (VGRGTYGHV) and Lys-52 contribute to the ATP site. Asp-151 serves as the catalytic Proton acceptor. The tract at residues 313–416 (EEEPDDKGDK…PQYSHQTHRY (104 aa)) is disordered. Residues 325–343 (QQQQQGNNHTNGTGHPGNQ) are compositionally biased toward low complexity. Composition is skewed to polar residues over residues 361 to 378 (PTTT…QRSN) and 386 to 416 (PGPS…THRY).

The protein belongs to the protein kinase superfamily. CMGC Ser/Thr protein kinase family. CDC2/CDKX subfamily. In terms of assembly, component of the Mediator complex. Interacts with ccnc. Mg(2+) serves as cofactor.

It localises to the nucleus. It carries out the reaction L-seryl-[protein] + ATP = O-phospho-L-seryl-[protein] + ADP + H(+). It catalyses the reaction L-threonyl-[protein] + ATP = O-phospho-L-threonyl-[protein] + ADP + H(+). The catalysed reaction is [DNA-directed RNA polymerase] + ATP = phospho-[DNA-directed RNA polymerase] + ADP + H(+). In terms of biological role, component of the Mediator complex, a coactivator involved in regulated gene transcription of nearly all RNA polymerase II-dependent genes. Mediator functions as a bridge to convey information from gene-specific regulatory proteins to the basal RNA polymerase II transcription machinery. Mediator is recruited to promoters by direct interactions with regulatory proteins and serves as a scaffold for the assembly of a functional pre-initiation complex with RNA polymerase II and the general transcription factors. Phosphorylates the CTD (C-terminal domain) of the large subunit of RNA polymerase II (RNAp II), which may inhibit the formation of a transcription initiation complex. This Xenopus laevis (African clawed frog) protein is Cyclin-dependent kinase 8 (cdk8).